A 351-amino-acid chain; its full sequence is Dihydroorotate dehydrogenase (quinone) (351 aa).

FMN is bound by residues 67–71 and T91; that span reads AGFDK. K71 contributes to the substrate binding site. 116–120 is a binding site for substrate; sequence NAMGF. Residues N145 and N178 each contribute to the FMN site. N178 serves as a coordination point for substrate. The active-site Nucleophile is S181. N183 is a binding site for substrate. The FMN site is built by K214 and T242. Residue 243 to 244 coordinates substrate; the sequence is NT. FMN-binding positions include G262, G291, and 312-313; that span reads YS.

It belongs to the dihydroorotate dehydrogenase family. Type 2 subfamily. As to quaternary structure, monomer. Requires FMN as cofactor.

Its subcellular location is the cell membrane. It catalyses the reaction (S)-dihydroorotate + a quinone = orotate + a quinol. The protein operates within pyrimidine metabolism; UMP biosynthesis via de novo pathway; orotate from (S)-dihydroorotate (quinone route): step 1/1. Catalyzes the conversion of dihydroorotate to orotate with quinone as electron acceptor. The sequence is that of Dihydroorotate dehydrogenase (quinone) from Helicobacter pylori (strain G27).